The chain runs to 277 residues: Sulfate transport system permease protein CysT (277 aa).

The next 7 helical transmembrane spans lie at 17–37 (LGTS…ALVM), 64–84 (LLSA…MAWI), 99–119 (LMDL…ASLF), 136–156 (VTYT…PFVV), 185–205 (FCKV…ALSF), 215–235 (VIFI…MIFV), and 243–263 (PAAS…LFSI). Positions 60–263 (YKVTLLSAFV…AASLLLLFSI (204 aa)) constitute an ABC transmembrane type-1 domain.

Belongs to the binding-protein-dependent transport system permease family. CysTW subfamily. As to quaternary structure, the complex is composed of two ATP-binding proteins (CysA), two transmembrane proteins (CysT and CysW) and a solute-binding protein (CysP).

The protein localises to the cell inner membrane. Functionally, part of the ABC transporter complex CysAWTP (TC 3.A.1.6.1) involved in sulfate/thiosulfate import. Probably responsible for the translocation of the substrate across the membrane. In Escherichia coli (strain K12), this protein is Sulfate transport system permease protein CysT (cysU).